The primary structure comprises 351 residues: tRNA-splicing endonuclease (351 aa).

Residues Tyr-287, His-298, and Lys-329 contribute to the active site.

Belongs to the tRNA-intron endonuclease family. Archaeal long subfamily. Homodimer.

The catalysed reaction is pretRNA = a 3'-half-tRNA molecule with a 5'-OH end + a 5'-half-tRNA molecule with a 2',3'-cyclic phosphate end + an intron with a 2',3'-cyclic phosphate and a 5'-hydroxyl terminus.. In terms of biological role, endonuclease that removes tRNA introns. Cleaves pre-tRNA at the 5'- and 3'-splice sites to release the intron. The products are an intron and two tRNA half-molecules bearing 2',3' cyclic phosphate and 5'-OH termini. Recognizes a pseudosymmetric substrate in which 2 bulged loops of 3 bases are separated by a stem of 4 bp. This is tRNA-splicing endonuclease from Methanococcoides burtonii (strain DSM 6242 / NBRC 107633 / OCM 468 / ACE-M).